The sequence spans 36 residues: Pancreatic polypeptide (36 aa).

Phe36 is modified (phenylalanine amide).

It belongs to the NPY family.

It is found in the secreted. Hormone secreted by pancreatic cells that acts as a regulator of pancreatic and gastrointestinal functions. The chain is Pancreatic polypeptide (ppy) from Alligator mississippiensis (American alligator).